The sequence spans 297 residues: 4-hydroxy-tetrahydrodipicolinate synthase (297 aa).

T46 lines the pyruvate pocket. Residue Y134 is the Proton donor/acceptor of the active site. Catalysis depends on K163, which acts as the Schiff-base intermediate with substrate. Residue I205 participates in pyruvate binding.

Belongs to the DapA family. As to quaternary structure, homotetramer; dimer of dimers.

The protein localises to the cytoplasm. The enzyme catalyses L-aspartate 4-semialdehyde + pyruvate = (2S,4S)-4-hydroxy-2,3,4,5-tetrahydrodipicolinate + H2O + H(+). The protein operates within amino-acid biosynthesis; L-lysine biosynthesis via DAP pathway; (S)-tetrahydrodipicolinate from L-aspartate: step 3/4. Functionally, catalyzes the condensation of (S)-aspartate-beta-semialdehyde [(S)-ASA] and pyruvate to 4-hydroxy-tetrahydrodipicolinate (HTPA). In Thermoanaerobacter pseudethanolicus (strain ATCC 33223 / 39E) (Clostridium thermohydrosulfuricum), this protein is 4-hydroxy-tetrahydrodipicolinate synthase.